The chain runs to 207 residues: Cytochrome c biogenesis ATP-binding export protein CcmA (207 aa).

One can recognise an ABC transporter domain in the interval 4 to 207; the sequence is LEVRELLCER…RISLTQTRAV (204 aa). 36–43 is a binding site for ATP; the sequence is GSNGAGKT.

Belongs to the ABC transporter superfamily. CcmA exporter (TC 3.A.1.107) family. As to quaternary structure, the complex is composed of two ATP-binding proteins (CcmA) and two transmembrane proteins (CcmB).

The protein localises to the cell inner membrane. The enzyme catalyses heme b(in) + ATP + H2O = heme b(out) + ADP + phosphate + H(+). Its function is as follows. Part of the ABC transporter complex CcmAB involved in the biogenesis of c-type cytochromes; once thought to export heme, this seems not to be the case, but its exact role is uncertain. Responsible for energy coupling to the transport system. The polypeptide is Cytochrome c biogenesis ATP-binding export protein CcmA (Escherichia coli O157:H7).